Reading from the N-terminus, the 121-residue chain is MARIAGVDIPRDKRVVISLTYIYGVGRSTAQEILAKANVSENTRVRDLTEEELGRIRSAVEEFKVEGDLRREVSLNIKRLIEIGAYRGIRHRRGLPVRGQNTKNNSRTRKGPRRTVANKKK.

Positions 94 to 121 (GLPVRGQNTKNNSRTRKGPRRTVANKKK) are disordered. Residues 106–121 (SRTRKGPRRTVANKKK) are compositionally biased toward basic residues.

The protein belongs to the universal ribosomal protein uS13 family. Part of the 30S ribosomal subunit. Forms a loose heterodimer with protein S19. Forms two bridges to the 50S subunit in the 70S ribosome.

Located at the top of the head of the 30S subunit, it contacts several helices of the 16S rRNA. In the 70S ribosome it contacts the 23S rRNA (bridge B1a) and protein L5 of the 50S subunit (bridge B1b), connecting the 2 subunits; these bridges are implicated in subunit movement. Contacts the tRNAs in the A and P-sites. The chain is Small ribosomal subunit protein uS13 from Halalkalibacterium halodurans (strain ATCC BAA-125 / DSM 18197 / FERM 7344 / JCM 9153 / C-125) (Bacillus halodurans).